We begin with the raw amino-acid sequence, 338 residues long: 1-aminocyclopropane-1-carboxylate deaminase (338 aa).

Residue Lys-51 is modified to N6-(pyridoxal phosphate)lysine. The Nucleophile role is filled by Ser-78.

It belongs to the ACC deaminase/D-cysteine desulfhydrase family. Homotrimer. Pyridoxal 5'-phosphate serves as cofactor.

It carries out the reaction 1-aminocyclopropane-1-carboxylate + H2O = 2-oxobutanoate + NH4(+). In terms of biological role, catalyzes a cyclopropane ring-opening reaction, the irreversible conversion of 1-aminocyclopropane-1-carboxylate (ACC) to ammonia and alpha-ketobutyrate. Allows growth on ACC as a nitrogen source. This is 1-aminocyclopropane-1-carboxylate deaminase from Pseudomonas syringae pv. tomato (strain ATCC BAA-871 / DC3000).